The following is a 32-amino-acid chain: Beta-hexosaminidase (32 aa).

The GH18 domain maps to 1-32 (GKSSSRPLGDATLGDLDFDIEVTQDYWDDLAR). Glu-21 (proton donor) is an active-site residue.

This sequence belongs to the glycosyl hydrolase 18 family. Chitinase class II subfamily.

The enzyme catalyses Hydrolysis of terminal non-reducing N-acetyl-D-hexosamine residues in N-acetyl-beta-D-hexosaminides.. Activity is decreased by HgCl(2) and maltose. Activity is stimulated by Na(2)SeO(4), BaCl(2), MgCl(2), chondroitin 6-sulfate and phenylmethylsulfonyl fluoride. Preferentially hydrolyzes pNP-GlcNAc, hydrolyzes pNP-GalNAc to a lesser extent. The protein is Beta-hexosaminidase of Palythoa caribaeorum (White encrusting zoanthid coral).